The primary structure comprises 474 residues: Adenosylhomocysteinase (474 aa).

The substrate site is built by Thr-53, Asp-135, and Glu-197. 198 to 200 (TTT) is an NAD(+) binding site. Residues Lys-227 and Asp-231 each contribute to the substrate site. NAD(+) contacts are provided by residues Asn-232, 261 to 266 (GYGDVG), Glu-284, Asn-319, 340 to 342 (IGH), and Asn-388.

This sequence belongs to the adenosylhomocysteinase family. The cofactor is NAD(+).

The protein localises to the cytoplasm. The catalysed reaction is S-adenosyl-L-homocysteine + H2O = L-homocysteine + adenosine. It participates in amino-acid biosynthesis; L-homocysteine biosynthesis; L-homocysteine from S-adenosyl-L-homocysteine: step 1/1. In terms of biological role, may play a key role in the regulation of the intracellular concentration of adenosylhomocysteine. The sequence is that of Adenosylhomocysteinase from Corynebacterium glutamicum (strain ATCC 13032 / DSM 20300 / JCM 1318 / BCRC 11384 / CCUG 27702 / LMG 3730 / NBRC 12168 / NCIMB 10025 / NRRL B-2784 / 534).